We begin with the raw amino-acid sequence, 560 residues long: Oxygen-dependent choline dehydrogenase (560 aa).

Residue 8 to 37 (DYIIIGAGSAGNVLATRLTEDADVSVLLLE) participates in FAD binding. H475 functions as the Proton acceptor in the catalytic mechanism.

Belongs to the GMC oxidoreductase family. The cofactor is FAD.

It catalyses the reaction choline + A = betaine aldehyde + AH2. It carries out the reaction betaine aldehyde + NAD(+) + H2O = glycine betaine + NADH + 2 H(+). It functions in the pathway amine and polyamine biosynthesis; betaine biosynthesis via choline pathway; betaine aldehyde from choline (cytochrome c reductase route): step 1/1. In terms of biological role, involved in the biosynthesis of the osmoprotectant glycine betaine. Catalyzes the oxidation of choline to betaine aldehyde and betaine aldehyde to glycine betaine at the same rate. In Stenotrophomonas maltophilia (strain R551-3), this protein is Oxygen-dependent choline dehydrogenase.